A 158-amino-acid polypeptide reads, in one-letter code: Transcription elongation factor GreA (158 aa).

Residues 47–74 (AEYHAAKEEQSHNEGRINELEDKLARAD) are a coiled coil.

This sequence belongs to the GreA/GreB family.

Its function is as follows. Necessary for efficient RNA polymerase transcription elongation past template-encoded arresting sites. The arresting sites in DNA have the property of trapping a certain fraction of elongating RNA polymerases that pass through, resulting in locked ternary complexes. Cleavage of the nascent transcript by cleavage factors such as GreA or GreB allows the resumption of elongation from the new 3'terminus. GreA releases sequences of 2 to 3 nucleotides. The chain is Transcription elongation factor GreA from Rhodopseudomonas palustris (strain ATCC BAA-98 / CGA009).